Reading from the N-terminus, the 430-residue chain is Tol-Pal system protein TolB (430 aa).

Positions 1–26 (MSLMTKLGLRALVASCLIAAGGAAHA) are cleaved as a signal peptide.

Belongs to the TolB family. The Tol-Pal system is composed of five core proteins: the inner membrane proteins TolA, TolQ and TolR, the periplasmic protein TolB and the outer membrane protein Pal. They form a network linking the inner and outer membranes and the peptidoglycan layer.

Its subcellular location is the periplasm. Functionally, part of the Tol-Pal system, which plays a role in outer membrane invagination during cell division and is important for maintaining outer membrane integrity. The polypeptide is Tol-Pal system protein TolB (Paraburkholderia phymatum (strain DSM 17167 / CIP 108236 / LMG 21445 / STM815) (Burkholderia phymatum)).